The chain runs to 170 residues: Acireductone dioxygenase (170 aa).

Fe(2+)-binding residues include H99, H101, E105, and H144. Residues H99, H101, E105, and H144 each contribute to the Ni(2+) site.

The protein belongs to the acireductone dioxygenase (ARD) family. Monomer. It depends on Fe(2+) as a cofactor. Ni(2+) is required as a cofactor.

It catalyses the reaction 1,2-dihydroxy-5-(methylsulfanyl)pent-1-en-3-one + O2 = 3-(methylsulfanyl)propanoate + CO + formate + 2 H(+). It carries out the reaction 1,2-dihydroxy-5-(methylsulfanyl)pent-1-en-3-one + O2 = 4-methylsulfanyl-2-oxobutanoate + formate + 2 H(+). Its pathway is amino-acid biosynthesis; L-methionine biosynthesis via salvage pathway; L-methionine from S-methyl-5-thio-alpha-D-ribose 1-phosphate: step 5/6. Its function is as follows. Catalyzes 2 different reactions between oxygen and the acireductone 1,2-dihydroxy-3-keto-5-methylthiopentene (DHK-MTPene) depending upon the metal bound in the active site. Fe-containing acireductone dioxygenase (Fe-ARD) produces formate and 2-keto-4-methylthiobutyrate (KMTB), the alpha-ketoacid precursor of methionine in the methionine recycle pathway. Ni-containing acireductone dioxygenase (Ni-ARD) produces methylthiopropionate, carbon monoxide and formate, and does not lie on the methionine recycle pathway. This is Acireductone dioxygenase from Bacillus thuringiensis subsp. konkukian (strain 97-27).